Consider the following 293-residue polypeptide: Phosphoribosylaminoimidazole-succinocarboxamide synthase (293 aa).

The protein belongs to the SAICAR synthetase family.

It catalyses the reaction 5-amino-1-(5-phospho-D-ribosyl)imidazole-4-carboxylate + L-aspartate + ATP = (2S)-2-[5-amino-1-(5-phospho-beta-D-ribosyl)imidazole-4-carboxamido]succinate + ADP + phosphate + 2 H(+). It functions in the pathway purine metabolism; IMP biosynthesis via de novo pathway; 5-amino-1-(5-phospho-D-ribosyl)imidazole-4-carboxamide from 5-amino-1-(5-phospho-D-ribosyl)imidazole-4-carboxylate: step 1/2. In Bordetella parapertussis (strain 12822 / ATCC BAA-587 / NCTC 13253), this protein is Phosphoribosylaminoimidazole-succinocarboxamide synthase.